The sequence spans 394 residues: Tryptophan synthase beta chain (394 aa).

Lys90 carries the N6-(pyridoxal phosphate)lysine modification.

Belongs to the TrpB family. As to quaternary structure, tetramer of two alpha and two beta chains. Pyridoxal 5'-phosphate is required as a cofactor.

The enzyme catalyses (1S,2R)-1-C-(indol-3-yl)glycerol 3-phosphate + L-serine = D-glyceraldehyde 3-phosphate + L-tryptophan + H2O. It participates in amino-acid biosynthesis; L-tryptophan biosynthesis; L-tryptophan from chorismate: step 5/5. Its function is as follows. The beta subunit is responsible for the synthesis of L-tryptophan from indole and L-serine. In Bacteroides thetaiotaomicron (strain ATCC 29148 / DSM 2079 / JCM 5827 / CCUG 10774 / NCTC 10582 / VPI-5482 / E50), this protein is Tryptophan synthase beta chain.